Reading from the N-terminus, the 540-residue chain is Sterol 14-alpha demethylase (540 aa).

The chain crosses the membrane as a helical span at residues 41 to 61; the sequence is PLFLVSGFLGVCVAYAVANII. Cys-485 contacts heme.

It belongs to the cytochrome P450 family. Heme is required as a cofactor.

It localises to the membrane. The enzyme catalyses a 14alpha-methyl steroid + 3 reduced [NADPH--hemoprotein reductase] + 3 O2 = a Delta(14) steroid + formate + 3 oxidized [NADPH--hemoprotein reductase] + 4 H2O + 4 H(+). The catalysed reaction is a 14alpha-methyl steroid + reduced [NADPH--hemoprotein reductase] + O2 = a 14alpha-hydroxymethyl steroid + oxidized [NADPH--hemoprotein reductase] + H2O + H(+). It carries out the reaction a 14alpha-hydroxymethyl steroid + reduced [NADPH--hemoprotein reductase] + O2 = a 14alpha-formyl steroid + oxidized [NADPH--hemoprotein reductase] + 2 H2O + H(+). It catalyses the reaction a 14alpha-formyl steroid + reduced [NADPH--hemoprotein reductase] + O2 = a Delta(14) steroid + formate + oxidized [NADPH--hemoprotein reductase] + H2O + 2 H(+). The enzyme catalyses lanosterol + 3 reduced [NADPH--hemoprotein reductase] + 3 O2 = 4,4-dimethyl-5alpha-cholesta-8,14,24-trien-3beta-ol + formate + 3 oxidized [NADPH--hemoprotein reductase] + 4 H2O + 4 H(+). The catalysed reaction is lanosterol + reduced [NADPH--hemoprotein reductase] + O2 = 32-hydroxylanosterol + oxidized [NADPH--hemoprotein reductase] + H2O + H(+). It carries out the reaction 32-hydroxylanosterol + reduced [NADPH--hemoprotein reductase] + O2 = 32-oxolanosterol + oxidized [NADPH--hemoprotein reductase] + 2 H2O + H(+). It catalyses the reaction 32-oxolanosterol + reduced [NADPH--hemoprotein reductase] + O2 = 4,4-dimethyl-5alpha-cholesta-8,14,24-trien-3beta-ol + formate + oxidized [NADPH--hemoprotein reductase] + H2O + 2 H(+). The enzyme catalyses eburicol + 3 reduced [NADPH--hemoprotein reductase] + 3 O2 = 14-demethyleburicol + formate + 3 oxidized [NADPH--hemoprotein reductase] + 4 H2O + 4 H(+). The catalysed reaction is eburicol + reduced [NADPH--hemoprotein reductase] + O2 = 32-hydroxyeburicol + oxidized [NADPH--hemoprotein reductase] + H2O + H(+). It carries out the reaction 32-hydroxyeburicol + reduced [NADPH--hemoprotein reductase] + O2 = 32-oxoeburicol + oxidized [NADPH--hemoprotein reductase] + 2 H2O + H(+). It catalyses the reaction 32-oxoeburicol + reduced [NADPH--hemoprotein reductase] + O2 = 14-demethyleburicol + formate + oxidized [NADPH--hemoprotein reductase] + H2O + 2 H(+). It participates in steroid biosynthesis; sterol biosynthesis. In terms of biological role, sterol 14-alpha demethylase; part of the gene cluster that mediates the biosynthesis of tetrahydropyranyl antifungal agent lanomycin that acts as an inhibitor of CYP51 and blocks the ergosterol biosynthesis. Sterol 14-alpha-demethylase plays a critical role in the biosynthesis of ergosterol, the major sterol component in fungal membranes that participates in a variety of functions. Acts as a self-resistant CYP51 that contains mutations found in CYP51s isolated from azole resistance strains and that is not inhibited by the final product of the cluster, lanomycin. The chain is Sterol 14-alpha demethylase from Pyrenophora dematioidea (Helminthosporium dematioideum).